A 156-amino-acid polypeptide reads, in one-letter code: uncharacterized protein (156 aa).

The segment covering methionine 1–alanine 12 has biased composition (pro residues). 2 disordered regions span residues methionine 1–alanine 89 and proline 129–aspartate 156. Residues alanine 49–threonine 67 are compositionally biased toward basic and acidic residues.

This is an uncharacterized protein from Homo sapiens (Human).